A 315-amino-acid chain; its full sequence is Aldo-keto reductase family 4 member C11 (315 aa).

A2 carries the N-acetylalanine modification. NADP(+) contacts are provided by residues 23-24 (TW) and D47. Residue Y52 is the Proton donor of the active site. NADP(+) is bound by residues H114, 158 to 159 (SN), Q180, 207 to 213 (SPLGSPG), 256 to 258 (KST), and 262 to 266 (RIREN). S295 is subject to Phosphoserine.

Belongs to the aldo/keto reductase family.

Its function is as follows. Oxidoreductase that may act on a broad range of substrates such as ketosteroids, aldehydes, ketones and sugars. The sequence is that of Aldo-keto reductase family 4 member C11 (AKR4C11) from Arabidopsis thaliana (Mouse-ear cress).